Consider the following 502-residue polypeptide: Rab11 family-interacting protein 4B (502 aa).

2 disordered regions span residues 1 to 49 (MSIQ…EEGI) and 71 to 98 (SALSSASLNEEQFEDYGEGEDGDCTTSS). Basic and acidic residues predominate over residues 15 to 29 (EEGRGVERDSDRDSA). The segment covering 71 to 80 (SALSSASLNE) has biased composition (polar residues). Residues 81 to 93 (EQFEDYGEGEDGD) are compositionally biased toward acidic residues. Residues 228–482 (DVKTKLKQEN…EEINLRLRQY (255 aa)) are a coiled coil. An FIP-RBD domain is found at 439 to 501 (EAKNLFATQT…DHNPSILEIK (63 aa)).

In terms of assembly, homodimer. Forms a complex with Rab11 (rab11a or rab11b) and arf6.

Its subcellular location is the recycling endosome membrane. It is found in the cleavage furrow. The protein localises to the midbody. The protein resides in the cytoplasmic vesicle. In terms of biological role, acts as a regulator of endocytic traffic by participating in membrane delivery. Required for the abscission step in cytokinesis, possibly by acting as an 'address tag' delivering recycling endosome membranes to the cleavage furrow during late cytokinesis. This is Rab11 family-interacting protein 4B (rab11fip4b) from Danio rerio (Zebrafish).